The sequence spans 263 residues: Urease accessory protein UreD 1 (263 aa).

It belongs to the UreD family. UreD, UreF and UreG form a complex that acts as a GTP-hydrolysis-dependent molecular chaperone, activating the urease apoprotein by helping to assemble the nickel containing metallocenter of UreC. The UreE protein probably delivers the nickel.

It localises to the cytoplasm. Its function is as follows. Required for maturation of urease via the functional incorporation of the urease nickel metallocenter. In Synechococcus sp. (strain JA-3-3Ab) (Cyanobacteria bacterium Yellowstone A-Prime), this protein is Urease accessory protein UreD 1.